The sequence spans 434 residues: 3-phosphoshikimate 1-carboxyvinyltransferase (434 aa).

3-phosphoshikimate is bound by residues K22, S23, and R27. A phosphoenolpyruvate-binding site is contributed by K22. Phosphoenolpyruvate is bound by residues G93 and R121. Positions 168, 169, 170, 199, 320, and 347 each coordinate 3-phosphoshikimate. Position 170 (Q170) interacts with phosphoenolpyruvate. Residue D320 is the Proton acceptor of the active site. Positions 351, 395, and 420 each coordinate phosphoenolpyruvate.

This sequence belongs to the EPSP synthase family. Monomer.

The protein localises to the cytoplasm. It carries out the reaction 3-phosphoshikimate + phosphoenolpyruvate = 5-O-(1-carboxyvinyl)-3-phosphoshikimate + phosphate. The protein operates within metabolic intermediate biosynthesis; chorismate biosynthesis; chorismate from D-erythrose 4-phosphate and phosphoenolpyruvate: step 6/7. Catalyzes the transfer of the enolpyruvyl moiety of phosphoenolpyruvate (PEP) to the 5-hydroxyl of shikimate-3-phosphate (S3P) to produce enolpyruvyl shikimate-3-phosphate and inorganic phosphate. This Cupriavidus taiwanensis (strain DSM 17343 / BCRC 17206 / CCUG 44338 / CIP 107171 / LMG 19424 / R1) (Ralstonia taiwanensis (strain LMG 19424)) protein is 3-phosphoshikimate 1-carboxyvinyltransferase.